Reading from the N-terminus, the 603-residue chain is Serine/threonine-protein kinase PLK1 (603 aa).

The segment at 1 to 35 (MSAAVTAGKLARAPADPGKAGVPGVAAPGAPAAAP) is disordered. Residue Ser-2 is modified to N-acetylserine. Residue Thr-6 is modified to Phosphothreonine. Low complexity predominate over residues 13 to 35 (APADPGKAGVPGVAAPGAPAAAP). Lys-19 is covalently cross-linked (Glycyl lysine isopeptide (Lys-Gly) (interchain with G-Cter in ubiquitin)). The region spanning 53 to 305 (YVRGRFLGKG…INELLNDEFF (253 aa)) is the Protein kinase domain. ATP-binding positions include 59–67 (LGKGGFAKC) and Lys-82. The residue at position 103 (Ser-103) is a Phosphoserine. An ATP-binding site is contributed by Glu-131. A Phosphoserine modification is found at Ser-137. The Proton acceptor role is filled by Asp-176. Residues 178–181 (KLGN) and Asp-194 each bind ATP. The activation loop stretch occupies residues 194–221 (DFGLATKVEYDGERKKTLCGTPNYIAPE). Position 210 is a phosphothreonine; by AURKA (Thr-210). Thr-214 is modified (phosphothreonine). Residue Ser-269 is modified to Phosphoserine; by autocatalysis. Ser-335 carries the phosphoserine modification. A D-box that targets the protein for proteasomal degradation in anaphase motif is present at residues 337 to 340 (RKPL). Lys-338 is covalently cross-linked (Glycyl lysine isopeptide (Lys-Gly) (interchain with G-Cter in SUMO2)). Positions 338–364 (KPLTVLNKGLENPLPERPREKEEPVVR) are disordered. The segment covering 351–364 (LPERPREKEEPVVR) has biased composition (basic and acidic residues). Ser-375 and Ser-450 each carry phosphoserine. Positions 410–488 (WVSKWVDYSD…LKYFRNYMSE (79 aa)) constitute a POLO box 1 domain. Residue Lys-492 forms a Glycyl lysine isopeptide (Lys-Gly) (interchain with G-Cter in ubiquitin) linkage. Residues 493–507 (AGANITPREGDELAR) are linker. Position 498 is a phosphothreonine (Thr-498). One can recognise a POLO box 2 domain in the interval 510 to 592 (YLRTWFRTRS…ARTMVDKLLS (83 aa)). Residues 538 to 540 (HTK) form an important for interaction with phosphorylated proteins region.

This sequence belongs to the protein kinase superfamily. Ser/Thr protein kinase family. CDC5/Polo subfamily. As to quaternary structure, interacts with CEP170. Interacts with EVI5. Interacts with FAM29A. Interacts with SLX4/BTBD12. Interacts with TTDN1. Interacts (via POLO-box domain) with the phosphorylated form of BUB1, CDC25C and CENPU. Interacts with KIF2A. Interacts with CYLD. Part of an astrin (SPAG5)-kinastrin (SKAP) complex containing KNSTRN, SPAG5, PLK1, DYNLL1 and SGO2. Interacts with BIRC6/bruce. Interacts with CDK1-phosphorylated FRY; this interaction occurs in mitotic cells, but not in interphase cells. FRY interaction facilitates AURKA-mediated PLK1 phosphorylation. Interacts with CDK1-phosphorylated DCTN6 during mitotic prometaphase; the interaction facilitates recruitment to kinetochores. Interacts with CEP68; the interaction phosphorylates CEP68. Interacts (via POLO-box domain) with DCTN1. Interacts with CEP20 in later G1, S, G2 and M phases of the cell cycle; this interaction recruits PLK1 to centrosomes, a step required for S phase progression. Interacts with KLHL22. Interacts (via POLO box domains) with NEDD9/HEF1 (via C-terminus). Interacts with FIRRM (via N-terminus region); required for maintaining, but not activating, PLK1 kinase activity. Interacts with FZR1. Interacts with SKA3; the interaction promotes the stability of PLK1; the interaction promotes the stability of PLK1. Interacts with the MTMR3:MTMR4 heterooligomer; brings CEP55 and PLK1 together during early mitosis, regulating the phosphorylation of CEP55 by PLK1 and its recruitment to the midbody where it can mediate cell abscission. Post-translationally, catalytic activity is enhanced by phosphorylation of Thr-210. Phosphorylation at Thr-210 is first detected on centrosomes in the G2 phase of the cell cycle, peaks in prometaphase and gradually disappears from centrosomes during anaphase. Dephosphorylation at Thr-210 at centrosomes is probably mediated by protein phosphatase 1C (PP1C), via interaction with PPP1R12A/MYPT1. Autophosphorylation and phosphorylation of Ser-137 may not be significant for the activation of PLK1 during mitosis, but may enhance catalytic activity during recovery after DNA damage checkpoint. Phosphorylated in vitro by STK10. In terms of processing, ubiquitinated by the anaphase promoting complex/cyclosome (APC/C) in anaphase and following DNA damage, leading to its degradation by the proteasome. Ubiquitination is mediated via its interaction with FZR1/CDH1. Ubiquitination and subsequent degradation prevents entry into mitosis and is essential to maintain an efficient G2 DNA damage checkpoint. Monoubiquitination at Lys-492 by the BCR(KLHL22) ubiquitin ligase complex does not lead to degradation: it promotes PLK1 dissociation from phosphoreceptor proteins and subsequent removal from kinetochores, allowing silencing of the spindle assembly checkpoint (SAC) and chromosome segregation. As to expression, placenta and colon.

The protein resides in the nucleus. The protein localises to the chromosome. It localises to the centromere. It is found in the kinetochore. Its subcellular location is the cytoplasm. The protein resides in the cytoskeleton. The protein localises to the microtubule organizing center. It localises to the centrosome. It is found in the spindle. Its subcellular location is the midbody. It carries out the reaction L-seryl-[protein] + ATP = O-phospho-L-seryl-[protein] + ADP + H(+). It catalyses the reaction L-threonyl-[protein] + ATP = O-phospho-L-threonyl-[protein] + ADP + H(+). Activated by phosphorylation of Thr-210 by AURKA; phosphorylation by AURKA is enhanced by BORA. Once activated, activity is stimulated by binding target proteins. Binding of target proteins has no effect on the non-activated kinase. Several inhibitors targeting PLKs are currently in development and are under investigation in a growing number of clinical trials, such as BI 2536, an ATP-competitive PLK1 inhibitor or BI 6727, a dihydropteridinone that specifically inhibits the catalytic activity of PLK1. Serine/threonine-protein kinase that performs several important functions throughout M phase of the cell cycle, including the regulation of centrosome maturation and spindle assembly, the removal of cohesins from chromosome arms, the inactivation of anaphase-promoting complex/cyclosome (APC/C) inhibitors, and the regulation of mitotic exit and cytokinesis. Polo-like kinase proteins act by binding and phosphorylating proteins that are already phosphorylated on a specific motif recognized by the POLO box domains. Phosphorylates BORA, BUB1B/BUBR1, CCNB1, CDC25C, CEP55, ECT2, ERCC6L, FBXO5/EMI1, FOXM1, KIF20A/MKLP2, CENPU, NEDD1, NINL, NPM1, NUDC, PKMYT1/MYT1, KIZ, MRE11, PPP1R12A/MYPT1, POLQ, PRC1, RACGAP1/CYK4, RAD51, RHNO1, SGO1, STAG2/SA2, TEX14, TOPORS, p73/TP73, TPT1, WEE1 and HNRNPU. Plays a key role in centrosome functions and the assembly of bipolar spindles by phosphorylating KIZ, NEDD1 and NINL. NEDD1 phosphorylation promotes subsequent targeting of the gamma-tubulin ring complex (gTuRC) to the centrosome, an important step for spindle formation. Phosphorylation of NINL component of the centrosome leads to NINL dissociation from other centrosomal proteins. Involved in mitosis exit and cytokinesis by phosphorylating CEP55, ECT2, KIF20A/MKLP2, CENPU, PRC1 and RACGAP1. Recruited at the central spindle by phosphorylating and docking PRC1 and KIF20A/MKLP2; creates its own docking sites on PRC1 and KIF20A/MKLP2 by mediating phosphorylation of sites subsequently recognized by the POLO box domains. Phosphorylates RACGAP1, thereby creating a docking site for the Rho GTP exchange factor ECT2 that is essential for the cleavage furrow formation. Promotes the central spindle recruitment of ECT2. Plays a central role in G2/M transition of mitotic cell cycle by phosphorylating CCNB1, CDC25C, FOXM1, CENPU, PKMYT1/MYT1, PPP1R12A/MYPT1 and WEE1. Part of a regulatory circuit that promotes the activation of CDK1 by phosphorylating the positive regulator CDC25C and inhibiting the negative regulators WEE1 and PKMYT1/MYT1. Also acts by mediating phosphorylation of cyclin-B1 (CCNB1) on centrosomes in prophase. Phosphorylates FOXM1, a key mitotic transcription regulator, leading to enhance FOXM1 transcriptional activity. Involved in kinetochore functions and sister chromatid cohesion by phosphorylating BUB1B/BUBR1, FBXO5/EMI1 and STAG2/SA2. PLK1 is high on non-attached kinetochores suggesting a role of PLK1 in kinetochore attachment or in spindle assembly checkpoint (SAC) regulation. Required for kinetochore localization of BUB1B. Regulates the dissociation of cohesin from chromosomes by phosphorylating cohesin subunits such as STAG2/SA2. Phosphorylates SGO1: required for spindle pole localization of isoform 3 of SGO1 and plays a role in regulating its centriole cohesion function. Mediates phosphorylation of FBXO5/EMI1, a negative regulator of the APC/C complex during prophase, leading to FBXO5/EMI1 ubiquitination and degradation by the proteasome. Acts as a negative regulator of p53 family members: phosphorylates TOPORS, leading to inhibit the sumoylation of p53/TP53 and simultaneously enhance the ubiquitination and subsequent degradation of p53/TP53. Phosphorylates the transactivation domain of the transcription factor p73/TP73, leading to inhibit p73/TP73-mediated transcriptional activation and pro-apoptotic functions. Phosphorylates BORA, and thereby promotes the degradation of BORA. Contributes to the regulation of AURKA function. Also required for recovery after DNA damage checkpoint and entry into mitosis. Phosphorylates MISP, leading to stabilization of cortical and astral microtubule attachments required for proper spindle positioning. Together with MEIKIN, acts as a regulator of kinetochore function during meiosis I: required both for mono-orientation of kinetochores on sister chromosomes and protection of centromeric cohesin from separase-mediated cleavage. Phosphorylates CEP68 and is required for its degradation. Regulates nuclear envelope breakdown during prophase by phosphorylating DCTN1 resulting in its localization in the nuclear envelope. Phosphorylates the heat shock transcription factor HSF1, promoting HSF1 nuclear translocation upon heat shock. Phosphorylates HSF1 also in the early mitotic period; this phosphorylation regulates HSF1 localization to the spindle pole, the recruitment of the SCF(BTRC) ubiquitin ligase complex induicing HSF1 degradation, and hence mitotic progression. Regulates mitotic progression by phosphorylating RIOK2. Through the phosphorylation of DZIP1 regulates the localization during mitosis of the BBSome, a ciliary protein complex involved in cilium biogenesis. Regulates DNA repair during mitosis by mediating phosphorylation of POLQ and RHNO1, thereby promoting POLQ recruitment to DNA damage sites. Phosphorylates ATXN10 which may play a role in the regulation of cytokinesis and may stimulate the proteasome-mediated degradation of ATXN10. The protein is Serine/threonine-protein kinase PLK1 (PLK1) of Homo sapiens (Human).